We begin with the raw amino-acid sequence, 520 residues long: General transcription factor 3C polypeptide 5 (520 aa).

An N-acetylalanine modification is found at Ala-2. The tract at residues 466 to 520 (LFSNTGKADRGKEQLMFESGEEEEEEEEEEEEEEEDFKPSDGSENEMETEILDYV) is disordered. Acidic residues-rich tracts occupy residues 484 to 501 (SGEE…EEED) and 508 to 520 (SENE…LDYV).

The protein belongs to the TFIIIC subunit 5 family. Part of the TFIIIC subcomplex TFIIIC2, consisting of six subunits, GTF3C1, GTF3C2, GTF3C3, GTF3C4, GTF3C5 and GTF3C6. Interacts with BRF1, GTF3C6 and TBP.

Its subcellular location is the nucleus. In terms of biological role, involved in RNA polymerase III-mediated transcription. Integral, tightly associated component of the DNA-binding TFIIIC2 subcomplex that directly binds tRNA and virus-associated RNA promoters. This chain is General transcription factor 3C polypeptide 5 (Gtf3c5), found in Mus musculus (Mouse).